Here is a 38-residue protein sequence, read N- to C-terminus: Large ribosomal subunit protein bL36 (38 aa).

It belongs to the bacterial ribosomal protein bL36 family.

The sequence is that of Large ribosomal subunit protein bL36 from Kosmotoga olearia (strain ATCC BAA-1733 / DSM 21960 / TBF 19.5.1).